Consider the following 148-residue polypeptide: Urease accessory protein UreE (148 aa).

It belongs to the UreE family.

It localises to the cytoplasm. Its function is as follows. Involved in urease metallocenter assembly. Binds nickel. Probably functions as a nickel donor during metallocenter assembly. The polypeptide is Urease accessory protein UreE (Geobacillus kaustophilus (strain HTA426)).